A 95-amino-acid polypeptide reads, in one-letter code: Aspartyl/glutamyl-tRNA(Asn/Gln) amidotransferase subunit C (95 aa).

The protein belongs to the GatC family. Heterotrimer of A, B and C subunits.

The enzyme catalyses L-glutamyl-tRNA(Gln) + L-glutamine + ATP + H2O = L-glutaminyl-tRNA(Gln) + L-glutamate + ADP + phosphate + H(+). It carries out the reaction L-aspartyl-tRNA(Asn) + L-glutamine + ATP + H2O = L-asparaginyl-tRNA(Asn) + L-glutamate + ADP + phosphate + 2 H(+). Functionally, allows the formation of correctly charged Asn-tRNA(Asn) or Gln-tRNA(Gln) through the transamidation of misacylated Asp-tRNA(Asn) or Glu-tRNA(Gln) in organisms which lack either or both of asparaginyl-tRNA or glutaminyl-tRNA synthetases. The reaction takes place in the presence of glutamine and ATP through an activated phospho-Asp-tRNA(Asn) or phospho-Glu-tRNA(Gln). This chain is Aspartyl/glutamyl-tRNA(Asn/Gln) amidotransferase subunit C, found in Cytophaga hutchinsonii (strain ATCC 33406 / DSM 1761 / CIP 103989 / NBRC 15051 / NCIMB 9469 / D465).